Reading from the N-terminus, the 663-residue chain is 4-hydroxy-3-methylbut-2-en-1-yl diphosphate synthase (flavodoxin) (663 aa).

Residues C568, C571, C602, and E609 each coordinate [4Fe-4S] cluster.

It belongs to the IspG family. It depends on [4Fe-4S] cluster as a cofactor.

The catalysed reaction is (2E)-4-hydroxy-3-methylbut-2-enyl diphosphate + oxidized [flavodoxin] + H2O + 2 H(+) = 2-C-methyl-D-erythritol 2,4-cyclic diphosphate + reduced [flavodoxin]. It participates in isoprenoid biosynthesis; isopentenyl diphosphate biosynthesis via DXP pathway; isopentenyl diphosphate from 1-deoxy-D-xylulose 5-phosphate: step 5/6. In terms of biological role, converts 2C-methyl-D-erythritol 2,4-cyclodiphosphate (ME-2,4cPP) into 1-hydroxy-2-methyl-2-(E)-butenyl 4-diphosphate. In Leptospira borgpetersenii serovar Hardjo-bovis (strain JB197), this protein is 4-hydroxy-3-methylbut-2-en-1-yl diphosphate synthase (flavodoxin).